We begin with the raw amino-acid sequence, 419 residues long: Putative zinc metalloprotease SPs1691 (419 aa).

Histidine 18 provides a ligand contact to Zn(2+). Glutamate 19 is an active-site residue. Position 22 (histidine 22) interacts with Zn(2+). 4 consecutive transmembrane segments (helical) span residues 169 to 191 (LITNFAGPMNNFILGIVVFILLV), 301 to 323 (LAWSGAFTILNALKGLITGFSLN), 343 to 365 (LESVLSLMAMLSINLGIFNLIPI), and 392 to 411 (AYITLAGVAIMVVLMIAVTW). Residues 175–274 (GPMNNFILGI…LKTVAVKPQK (100 aa)) enclose the PDZ domain.

This sequence belongs to the peptidase M50B family. Requires Zn(2+) as cofactor.

The protein resides in the cell membrane. In Streptococcus pyogenes serotype M3 (strain SSI-1), this protein is Putative zinc metalloprotease SPs1691 (eep).